Reading from the N-terminus, the 523-residue chain is 2,3-bisphosphoglycerate-independent phosphoglycerate mutase (523 aa).

2 residues coordinate Mn(2+): Asp-13 and Ser-63. The Phosphoserine intermediate role is filled by Ser-63. Residues His-124, 156–157 (RD), Arg-188, Arg-194, 268–271 (RSDR), and Lys-341 each bind substrate. Mn(2+) is bound by residues Asp-408, His-412, Asp-449, His-450, and His-467.

This sequence belongs to the BPG-independent phosphoglycerate mutase family. As to quaternary structure, monomer. The cofactor is Mn(2+).

The enzyme catalyses (2R)-2-phosphoglycerate = (2R)-3-phosphoglycerate. The protein operates within carbohydrate degradation; glycolysis; pyruvate from D-glyceraldehyde 3-phosphate: step 3/5. In terms of biological role, catalyzes the interconversion of 2-phosphoglycerate and 3-phosphoglycerate. The protein is 2,3-bisphosphoglycerate-independent phosphoglycerate mutase of Salinibacter ruber (strain DSM 13855 / M31).